Reading from the N-terminus, the 243-residue chain is Phosphate-specific transport system accessory protein PhoU (243 aa).

It belongs to the PhoU family. In terms of assembly, homodimer. Interacts with phosphate regulon transcriptional regulatory protein PhoB and ferric uptake regulation protein Fur.

The protein resides in the cytoplasm. Functionally, part of the phosphate (Pho) regulon, which plays a key role in phosphate homeostasis. Encoded together with proteins of the phosphate-specific transport (Pst) system in the polycistronic pstSCAB-phoU operon. PhoU is essential for the repression of the Pho regulon at high phosphate conditions. In this role, it may bind, possibly as a chaperone, to PhoR, PhoB or a PhoR-PhoB complex to promote dephosphorylation of phospho-PhoB, or inhibit formation of the PhoR-PhoB transitory complex. In Edwardsiella tarda, this protein is Phosphate-specific transport system accessory protein PhoU.